The following is a 100-amino-acid chain: Large ribosomal subunit protein uL23 (100 aa).

The protein belongs to the universal ribosomal protein uL23 family. Part of the 50S ribosomal subunit. Contacts protein L29, and trigger factor when it is bound to the ribosome.

One of the early assembly proteins it binds 23S rRNA. One of the proteins that surrounds the polypeptide exit tunnel on the outside of the ribosome. Forms the main docking site for trigger factor binding to the ribosome. In Photobacterium profundum (strain SS9), this protein is Large ribosomal subunit protein uL23.